The primary structure comprises 274 residues: MSDMHAASREALAKVSSDLDTALKADNTVAVAAQAGTELFDVVEVLDGDRGLRVAVADSSKDAQQRVGLIGAVFGGKVSQVTLEILKDAAEQTWSTPREFRTGLVGLGRRALLRSAEMQGQLGRVEDELFRLSRILDRESQLTQLLSDRTQDSAARRDLLAKVLYGKVTSVTEALALQVIGRPEHNPIDDVAALAAAAAKLQGRSVAHVVSAVDLNDGQQQALADKLGRIYGRAMSIHSEVDTSLLGGMVIRVGDEVIDGSTSGKLERLRATFA.

The protein belongs to the ATPase delta chain family. F-type ATPases have 2 components, F(1) - the catalytic core - and F(0) - the membrane proton channel. F(1) has five subunits: alpha(3), beta(3), gamma(1), delta(1), epsilon(1). F(0) has three main subunits: a(1), b(2) and c(10-14). The alpha and beta chains form an alternating ring which encloses part of the gamma chain. F(1) is attached to F(0) by a central stalk formed by the gamma and epsilon chains, while a peripheral stalk is formed by the delta and b chains.

The protein resides in the cell membrane. Its function is as follows. F(1)F(0) ATP synthase produces ATP from ADP in the presence of a proton or sodium gradient. F-type ATPases consist of two structural domains, F(1) containing the extramembraneous catalytic core and F(0) containing the membrane proton channel, linked together by a central stalk and a peripheral stalk. During catalysis, ATP synthesis in the catalytic domain of F(1) is coupled via a rotary mechanism of the central stalk subunits to proton translocation. This protein is part of the stalk that links CF(0) to CF(1). It either transmits conformational changes from CF(0) to CF(1) or is implicated in proton conduction. The polypeptide is ATP synthase subunit delta (Corynebacterium efficiens (strain DSM 44549 / YS-314 / AJ 12310 / JCM 11189 / NBRC 100395)).